We begin with the raw amino-acid sequence, 360 residues long: Archaemetzincin-2 (360 aa).

Zn(2+) is bound at residue H254. The Proton acceptor role is filled by E255. Zn(2+) is bound by residues H258, H264, C265, C270, C289, and C292.

Belongs to the peptidase M54 family. Zn(2+) serves as cofactor.

Probable zinc metalloprotease. The polypeptide is Archaemetzincin-2 (AMZ2) (Pongo abelii (Sumatran orangutan)).